The primary structure comprises 501 residues: MDHFKQLEVWFVIGSQHLYGPETLRQVKENAEKVVAGLNQQANLPVKLVLKPLVKTPDEILALCRDANYQDNCIGLLTWLHTFSPAKMWIGGLSVLSKPLLQFHTQFNAEVPWDTMDMDFMNLNQTAHGGREFGFIGARMRQAHQVVVGHWQDKNAHVRIGKWMRVAAAIQESKQLKVARFGDNMREVAVTEGDKVGAQIQFGYSVSAWGLGDLTAVVDAVSKGDIDALIEEYETSYQLTDAVKLNGANRQNLLDAAQIELGMKRFLEQGGYHAFTTDFENLYGLKQLPGLAVQRLMQQGYGFGGEGDWKTAALLRIMKVMAGGLSGGTSFMEDYTYNFQNGNDLVVGSHMLEVCPTIAKEQKPILDAQHLGIGGKADPARLIFSTPAGPSLNASVIDMGDRFRMLVNLVDTIEQPRPLPKLPVARAIWKAQPSLEVAAEAWILAGGAHHTVFSQALDLDHMRLYAEMQNIELLVIDNETRLHEFKDALRWNEVYYKLCSR.

Residues Glu306, Glu333, His350, and His450 each coordinate Mn(2+).

It belongs to the arabinose isomerase family. In terms of assembly, homohexamer. Requires Mn(2+) as cofactor.

The enzyme catalyses beta-L-arabinopyranose = L-ribulose. It participates in carbohydrate degradation; L-arabinose degradation via L-ribulose; D-xylulose 5-phosphate from L-arabinose (bacterial route): step 1/3. In terms of biological role, catalyzes the conversion of L-arabinose to L-ribulose. This chain is L-arabinose isomerase, found in Pectobacterium atrosepticum (strain SCRI 1043 / ATCC BAA-672) (Erwinia carotovora subsp. atroseptica).